The following is a 127-amino-acid chain: Small ribosomal subunit protein eS8 (127 aa).

It belongs to the eukaryotic ribosomal protein eS8 family. As to quaternary structure, part of the 30S ribosomal subunit.

The polypeptide is Small ribosomal subunit protein eS8 (rps8e) (Pyrococcus abyssi (strain GE5 / Orsay)).